A 336-amino-acid chain; its full sequence is Ferrochelatase (336 aa).

Histidine 206 and glutamate 287 together coordinate Fe cation.

Belongs to the ferrochelatase family.

The protein localises to the cytoplasm. The enzyme catalyses heme b + 2 H(+) = protoporphyrin IX + Fe(2+). It participates in porphyrin-containing compound metabolism; protoheme biosynthesis; protoheme from protoporphyrin-IX: step 1/1. In terms of biological role, catalyzes the ferrous insertion into protoporphyrin IX. The protein is Ferrochelatase of Neisseria meningitidis serogroup A / serotype 4A (strain DSM 15465 / Z2491).